A 607-amino-acid polypeptide reads, in one-letter code: MDNEQRLKRRENIRNFSIIAHIDHGKSTLADRILENTKSVETRDMQDQLLDSMDLERERGITIKLNAVRLKYEAKDGNTYTFHLIDTPGHVDFTYEVSRSLAACEGAILVVDAAQGIEAQTLANVYLALDNELELLPVINKIDLPAAEPERVKQEIEDMIGLDQDDVVLASAKSNIGIEEILEKIVEVVPAPDGDPEAPLKALIFDSEYDPYRGVISSIRIVDGVVKAGDKIRMMATGKEFEVTEVGINTPKQLPVDELTVGDVGYIIASIKNVDDSRVGDTITLASRPASEPLQGYKKMNPMVYCGLFPIDNKNYNDLREALEKLQLNDASLEFEPESSQALGFGYRTGFLGMLHMEIIQERIEREFGIELIATAPSVIYQCVLRDGSEVTVDNPAQMPDRDKIDKIFEPYVRATMMVPNDYVGAVMELCQRKRGQFINMDYLDDIRVNIVYELPLAEVVFDFFDQLKSNTKGYASFDYEFIENKESNLVKMDILLNGDKVDALSFIVHRDFAYERGKALVEKLKTLIPRQQFEVPVQAAIGQKIVARTNIKSMGKNVLAKCYGGDISRKRKLLEKQKAGKAKMKAVGNVEIPQDAFLAVLKMDDE.

A tr-type G domain is found at 11–193; the sequence is ENIRNFSIIA…KIVEVVPAPD (183 aa). GTP is bound by residues 23-28 and 140-143; these read DHGKST and NKID.

The protein belongs to the TRAFAC class translation factor GTPase superfamily. Classic translation factor GTPase family. LepA subfamily.

Its subcellular location is the cell membrane. It catalyses the reaction GTP + H2O = GDP + phosphate + H(+). Required for accurate and efficient protein synthesis under certain stress conditions. May act as a fidelity factor of the translation reaction, by catalyzing a one-codon backward translocation of tRNAs on improperly translocated ribosomes. Back-translocation proceeds from a post-translocation (POST) complex to a pre-translocation (PRE) complex, thus giving elongation factor G a second chance to translocate the tRNAs correctly. Binds to ribosomes in a GTP-dependent manner. The protein is Elongation factor 4 of Staphylococcus aureus (strain USA300).